The chain runs to 502 residues: Glycerol kinase (502 aa).

T14 lines the ADP pocket. Residues T14, T15, and S16 each coordinate ATP. Sn-glycerol 3-phosphate is bound at residue T14. R18 serves as a coordination point for ADP. 4 residues coordinate sn-glycerol 3-phosphate: R84, E85, Y136, and D246. Positions 84, 85, 136, 246, and 247 each coordinate glycerol. Positions 268 and 311 each coordinate ADP. The ATP site is built by T268, G311, Q315, and G412. Residues G412 and N416 each contribute to the ADP site.

This sequence belongs to the FGGY kinase family. Homotetramer and homodimer (in equilibrium). Heterodimer with EIIA-Glc. Binds 1 zinc ion per glycerol kinase EIIA-Glc dimer. The zinc ion is important for dimerization.

It carries out the reaction glycerol + ATP = sn-glycerol 3-phosphate + ADP + H(+). The protein operates within polyol metabolism; glycerol degradation via glycerol kinase pathway; sn-glycerol 3-phosphate from glycerol: step 1/1. Activity of this regulatory enzyme is affected by several metabolites. Allosterically and non-competitively inhibited by fructose 1,6-bisphosphate (FBP) and unphosphorylated phosphocarrier protein EIIA-Glc (III-Glc), an integral component of the bacterial phosphotransferase (PTS) system. Its function is as follows. Key enzyme in the regulation of glycerol uptake and metabolism. Catalyzes the phosphorylation of glycerol to yield sn-glycerol 3-phosphate. The chain is Glycerol kinase from Enterobacter sp. (strain 638).